A 1051-amino-acid polypeptide reads, in one-letter code: Putative transcription factor SEF1 (1051 aa).

A compositionally biased stretch (basic and acidic residues) spans 1 to 10; sequence MSTDVSERGA. Disordered regions lie at residues 1–54 and 67–90; these read MSTD…SEES and GQAS…RPVT. Residues 11–21 are compositionally biased toward low complexity; sequence EAGSSSGLLSS. Residues 92-122 constitute a DNA-binding region (zn(2)-C6 fungal-type); sequence CTHCRQHKIKCNASENFPSSCSRCERMGLQC. Positions 206-218 are enriched in low complexity; sequence SSVKSSVNTPSGS. Disordered stretches follow at residues 206–227, 738–759, and 927–968; these read SSVK…VDVS, EKNR…TEKR, and ASGN…QPAP.

Its subcellular location is the nucleus. Its function is as follows. Putative transcription factor. The protein is Putative transcription factor SEF1 (SEF1) of Eremothecium gossypii (strain ATCC 10895 / CBS 109.51 / FGSC 9923 / NRRL Y-1056) (Yeast).